We begin with the raw amino-acid sequence, 303 residues long: Methionyl-tRNA formyltransferase (303 aa).

106–109 serves as a coordination point for (6S)-5,6,7,8-tetrahydrofolate; sequence SLLP.

It belongs to the Fmt family.

The catalysed reaction is L-methionyl-tRNA(fMet) + (6R)-10-formyltetrahydrofolate = N-formyl-L-methionyl-tRNA(fMet) + (6S)-5,6,7,8-tetrahydrofolate + H(+). Its function is as follows. Attaches a formyl group to the free amino group of methionyl-tRNA(fMet). The formyl group appears to play a dual role in the initiator identity of N-formylmethionyl-tRNA by promoting its recognition by IF2 and preventing the misappropriation of this tRNA by the elongation apparatus. In Thermosipho melanesiensis (strain DSM 12029 / CIP 104789 / BI429), this protein is Methionyl-tRNA formyltransferase.